Consider the following 110-residue polypeptide: UPF0145 protein MTH_507 (110 aa).

The protein belongs to the UPF0145 family.

The sequence is that of UPF0145 protein MTH_507 from Methanothermobacter thermautotrophicus (strain ATCC 29096 / DSM 1053 / JCM 10044 / NBRC 100330 / Delta H) (Methanobacterium thermoautotrophicum).